A 700-amino-acid chain; its full sequence is Putative ankyrin repeat protein FPV018 (700 aa).

ANK repeat units lie at residues 29–59 (DRLL…VINM), 63–92 (NRLL…VING), 126–155 (RIRR…DLKM), 204–233 (MRRI…LADT), 236–265 (ALED…DINS), 270–299 (NSHT…DPDI), 301–332 (DIYS…RIRC), 395–424 (CNMY…DVNV), 428–457 (YGKT…NVNE), 461–490 (YGIT…DVNQ), and 494–523 (DKNT…DMCF).

This Fowlpox virus (strain NVSL) (FPV) protein is Putative ankyrin repeat protein FPV018.